The primary structure comprises 208 residues: Large ribosomal subunit protein uL3 (208 aa).

Residue Gln149 is modified to N5-methylglutamine.

Belongs to the universal ribosomal protein uL3 family. Part of the 50S ribosomal subunit. Forms a cluster with proteins L14 and L19. Methylated by PrmB.

In terms of biological role, one of the primary rRNA binding proteins, it binds directly near the 3'-end of the 23S rRNA, where it nucleates assembly of the 50S subunit. This Haemophilus influenzae (strain PittGG) protein is Large ribosomal subunit protein uL3.